We begin with the raw amino-acid sequence, 68 residues long: Protein transport protein Sec61 gamma-1 subunit (68 aa).

The Cytoplasmic segment spans residues 1–32 (MDKVVKFAEPGRAFAKDSIRLVKRCTKPDRKE). The helical transmembrane segment at 33 to 61 (FQKIAIATAVGFAIMGFIGFFVKLIHIPI) threads the bilayer. Residues 62–68 (NNIIVGS) are Extracellular-facing.

Belongs to the SecE/SEC61-gamma family. In terms of assembly, heterotrimeric complex composed of SEC61-alpha, SEC61-beta and SEC61-gamma.

It localises to the endoplasmic reticulum membrane. Functionally, necessary for protein translocation in the endoplasmic reticulum. This Drosophila melanogaster (Fruit fly) protein is Protein transport protein Sec61 gamma-1 subunit (SEC61G1).